Here is a 342-residue protein sequence, read N- to C-terminus: tRNA N6-adenosine threonylcarbamoyltransferase (342 aa).

Fe cation contacts are provided by His-111 and His-115. Residues 134–138 (LVSGG), Asp-167, Gly-180, and Asn-277 each bind substrate. Residue Asp-305 participates in Fe cation binding.

This sequence belongs to the KAE1 / TsaD family. Fe(2+) serves as cofactor.

Its subcellular location is the cytoplasm. The enzyme catalyses L-threonylcarbamoyladenylate + adenosine(37) in tRNA = N(6)-L-threonylcarbamoyladenosine(37) in tRNA + AMP + H(+). Its function is as follows. Required for the formation of a threonylcarbamoyl group on adenosine at position 37 (t(6)A37) in tRNAs that read codons beginning with adenine. Is involved in the transfer of the threonylcarbamoyl moiety of threonylcarbamoyl-AMP (TC-AMP) to the N6 group of A37, together with TsaE and TsaB. TsaD likely plays a direct catalytic role in this reaction. This is tRNA N6-adenosine threonylcarbamoyltransferase from Haemophilus influenzae (strain ATCC 51907 / DSM 11121 / KW20 / Rd).